We begin with the raw amino-acid sequence, 1281 residues long: Zinc finger transcription factor Trps1 (1281 aa).

The interval 1 to 198 (MVRKKNPPLR…VPSDGGVRLN (198 aa)) is disordered. Residue Lys-29 forms a Glycyl lysine isopeptide (Lys-Gly) (interchain with G-Cter in SUMO2) linkage. Residues 40–49 (DQMSENTDQS) show a composition bias toward polar residues. Over residues 53–63 (ELNHKEEHSLH) the composition is skewed to basic and acidic residues. Residue Lys-76 forms a Glycyl lysine isopeptide (Lys-Gly) (interchain with G-Cter in SUMO2) linkage. 2 positions are modified to phosphoserine: Ser-90 and Ser-127. Basic and acidic residues predominate over residues 148-162 (LETKEDQKMSPKATE). Over residues 163-189 (ETGQAQSGQANCQGLSPVSVASKNPQV) the composition is skewed to polar residues. Phosphoserine is present on residues Ser-178 and Ser-216. A C2H2-type 1; atypical zinc finger spans residues 222–247 (FKCNICGYGYYGNDPTDLIKHFRKYH). Lys-263 is covalently cross-linked (Glycyl lysine isopeptide (Lys-Gly) (interchain with G-Cter in SUMO2)). The segment at 333 to 358 (FRCKFCNFTYMGNSSTELEQHFLQTH) adopts a C2H2-type 2; atypical zinc-finger fold. Residues 365–394 (SLPSSEVAKPSEKNSNKSIPALQSSDSGDL) form a disordered region. Residues 380–391 (NKSIPALQSSDS) are compositionally biased toward polar residues. Glycyl lysine isopeptide (Lys-Gly) (interchain with G-Cter in SUMO2) cross-links involve residues Lys-418, Lys-457, Lys-474, and Lys-488. A disordered region spans residues 483–512 (QNDLAKSSEGETMTKTDKSSSGAKKKDFSS). Residues 488-512 (KSSEGETMTKTDKSSSGAKKKDFSS) show a composition bias toward basic and acidic residues. The C2H2-type 3; atypical zinc-finger motif lies at 614–637 (HQCHQCSFTTPDVDVLLFHYESVH). The interval 635–819 (SVHESQASDV…SLGLLTPVSG (185 aa)) is mediates interaction with GLI3. Lys-645 is covalently cross-linked (Glycyl lysine isopeptide (Lys-Gly) (interchain with G-Cter in SUMO2)). C2H2-type zinc fingers lie at residues 666 to 689 (HSCTKCDFITQVEEEISRHYRRAH) and 692 to 715 (YKCRQCSFTAADTQSLLEHFNTVH). A Glycyl lysine isopeptide (Lys-Gly) (interchain with G-Cter in SUMO2) cross-link involves residue Lys-737. Thr-751 is subject to Phosphothreonine. Residue Lys-755 forms a Glycyl lysine isopeptide (Lys-Gly) (interchain with G-Cter in SUMO2) linkage. Residue Lys-766 forms a Glycyl lysine isopeptide (Lys-Gly) (interchain with G-Cter in SUMO1); alternate linkage. Residue Lys-766 forms a Glycyl lysine isopeptide (Lys-Gly) (interchain with G-Cter in SUMO2); alternate linkage. Residues Lys-825, Lys-850, Lys-877, and Lys-879 each participate in a glycyl lysine isopeptide (Lys-Gly) (interchain with G-Cter in SUMO2) cross-link. A disordered region spans residues 856 to 887 (APAGGEKSGALPQQYPASGENKSKDESQSLLR). The GATA-type zinc finger occupies 896 to 920 (CANCLTTKTSLWRKNANGGYVCNAC). Glycyl lysine isopeptide (Lys-Gly) (interchain with G-Cter in SUMO2) cross-links involve residues Lys-925, Lys-937, and Lys-965. Polar residues predominate over residues 961–977 (EQLNKQQRGSNEEQVNG). Residues 961–1000 (EQLNKQQRGSNEEQVNGSPLERRSEDHLTESHQREIPLPS) form a disordered region. Phosphoserine is present on Ser-978. Residues 980–995 (LERRSEDHLTESHQRE) are compositionally biased toward basic and acidic residues. Positions 985–1184 (EDHLTESHQR…PTANGASKEK (200 aa)) are mediates interaction with RNF4. Glycyl lysine isopeptide (Lys-Gly) (interchain with G-Cter in SUMO2) cross-links involve residues Lys-1003, Lys-1012, Lys-1030, and Lys-1040. Residues 1039 to 1080 (IKSPQESTGDPGNSSSVSEGKGSSERGSPIEKYMRPAKHPNY) form a disordered region. Residues 1040–1049 (KSPQESTGDP) are compositionally biased toward polar residues. Ser-1041 carries the post-translational modification Phosphoserine. Over residues 1050–1059 (GNSSSVSEGK) the composition is skewed to low complexity. Basic and acidic residues predominate over residues 1060 to 1072 (GSSERGSPIEKYM). Position 1066 is a phosphoserine (Ser-1066). Lys-1070 participates in a covalent cross-link: Glycyl lysine isopeptide (Lys-Gly) (interchain with G-Cter in SUMO2). Phosphoserine is present on Ser-1085. A transcriptional repressor domain region spans residues 1163–1281 (PLDLAIKHSR…QVEKNGKPKE (119 aa)). The segment at 1168–1196 (IKHSRPGPTANGASKEKTKAPPNVKNEGP) is disordered. Residues Lys-1192 and Lys-1201 each participate in a glycyl lysine isopeptide (Lys-Gly) (interchain with G-Cter in SUMO2); alternate cross-link. Glycyl lysine isopeptide (Lys-Gly) (interchain with G-Cter in SUMO); alternate cross-links involve residues Lys-1192 and Lys-1201. A Glycyl lysine isopeptide (Lys-Gly) (interchain with G-Cter in SUMO1); alternate cross-link involves residue Lys-1201. 2 consecutive C2H2-type zinc fingers follow at residues 1215–1237 (TKCVHCGIVFLDEVMYALHMSCH) and 1243–1267 (FQCSICQHLCTDKYDFTTHIQRGLH).

As to quaternary structure, interacts with RNF4; regulates TRPS1 repressor activity. Interacts specifically with the activator form of GLI3 (GLI3A) but not with the repressor form (GLI3R). Post-translationally, sumoylated. Sumoylation in the repressor domain inhibits the transcription repression activity. Sumoylation on Lys-1201 is the major site. Appears to be sumoylated on multiple sites. In terms of tissue distribution, ubiquitously expressed in the adult. Found in fetal brain, lung, kidney, liver, spleen and thymus. More highly expressed in androgen-dependent than in androgen-independent prostate cancer cells.

The protein localises to the nucleus. Functionally, transcriptional repressor. Binds specifically to GATA sequences and represses expression of GATA-regulated genes at selected sites and stages in vertebrate development. Regulates chondrocyte proliferation and differentiation. Executes multiple functions in proliferating chondrocytes, expanding the region of distal chondrocytes, activating proliferation in columnar cells and supporting the differentiation of columnar into hypertrophic chondrocytes. The chain is Zinc finger transcription factor Trps1 (TRPS1) from Homo sapiens (Human).